The primary structure comprises 324 residues: Quinolinate synthase 1 (324 aa).

Histidine 48 and serine 66 together coordinate iminosuccinate. Cysteine 111 is a [4Fe-4S] cluster binding site. Iminosuccinate is bound by residues 137–139 and serine 154; that span reads YVN. Cysteine 196 provides a ligand contact to [4Fe-4S] cluster. Residues 222–224 and threonine 239 contribute to the iminosuccinate site; that span reads HPE. Cysteine 282 is a binding site for [4Fe-4S] cluster.

This sequence belongs to the quinolinate synthase family. Type 2 subfamily. [4Fe-4S] cluster serves as cofactor.

The protein resides in the cytoplasm. The enzyme catalyses iminosuccinate + dihydroxyacetone phosphate = quinolinate + phosphate + 2 H2O + H(+). It participates in cofactor biosynthesis; NAD(+) biosynthesis; quinolinate from iminoaspartate: step 1/1. Its function is as follows. Catalyzes the condensation of iminoaspartate with dihydroxyacetone phosphate to form quinolinate. This is Quinolinate synthase 1 from Mesorhizobium japonicum (strain LMG 29417 / CECT 9101 / MAFF 303099) (Mesorhizobium loti (strain MAFF 303099)).